The primary structure comprises 1072 residues: Carbamoyl phosphate synthase large chain (1072 aa).

The tract at residues 1–401 (MPKRLDINTI…SLLKAVRSLE (401 aa)) is carboxyphosphate synthetic domain. Residues R129, R169, G175, G176, K208, I210, E215, G241, V242, H243, Q284, and E298 each coordinate ATP. The 195-residue stretch at 133 to 327 (RTLMQELNEP…IAKLAAKIAV (195 aa)) folds into the ATP-grasp 1 domain. Mg(2+) contacts are provided by Q284, E298, and N300. 3 residues coordinate Mn(2+): Q284, E298, and N300. Residues 402–546 (LGVYHLELEH…YSTYGDENES (145 aa)) form an oligomerization domain region. Positions 547–929 (VRTDRKSVVV…ALYKGLVASG (383 aa)) are carbamoyl phosphate synthetic domain. One can recognise an ATP-grasp 2 domain in the interval 671 to 861 (EAALTQLGIP…MANVATKVIL (191 aa)). Positions 707, 746, 752, 777, 778, 779, 780, 820, and 832 each coordinate ATP. The Mg(2+) site is built by Q820, E832, and N834. Mn(2+)-binding residues include Q820, E832, and N834. The MGS-like domain maps to 930–1072 (INIPTHGSVI…QTKRHEVVHA (143 aa)). Residues 930-1072 (INIPTHGSVI…QTKRHEVVHA (143 aa)) are allosteric domain.

It belongs to the CarB family. Composed of two chains; the small (or glutamine) chain promotes the hydrolysis of glutamine to ammonia, which is used by the large (or ammonia) chain to synthesize carbamoyl phosphate. Tetramer of heterodimers (alpha,beta)4. The cofactor is Mg(2+). Mn(2+) is required as a cofactor.

It catalyses the reaction hydrogencarbonate + L-glutamine + 2 ATP + H2O = carbamoyl phosphate + L-glutamate + 2 ADP + phosphate + 2 H(+). The enzyme catalyses hydrogencarbonate + NH4(+) + 2 ATP = carbamoyl phosphate + 2 ADP + phosphate + 2 H(+). The protein operates within amino-acid biosynthesis; L-arginine biosynthesis; carbamoyl phosphate from bicarbonate: step 1/1. It participates in pyrimidine metabolism; UMP biosynthesis via de novo pathway; (S)-dihydroorotate from bicarbonate: step 1/3. Its function is as follows. Large subunit of the glutamine-dependent carbamoyl phosphate synthetase (CPSase). CPSase catalyzes the formation of carbamoyl phosphate from the ammonia moiety of glutamine, carbonate, and phosphate donated by ATP, constituting the first step of 2 biosynthetic pathways, one leading to arginine and/or urea and the other to pyrimidine nucleotides. The large subunit (synthetase) binds the substrates ammonia (free or transferred from glutamine from the small subunit), hydrogencarbonate and ATP and carries out an ATP-coupled ligase reaction, activating hydrogencarbonate by forming carboxy phosphate which reacts with ammonia to form carbamoyl phosphate. This chain is Carbamoyl phosphate synthase large chain, found in Bacillus cereus (strain G9842).